Consider the following 250-residue polypeptide: Small ribosomal subunit protein uS2 (250 aa).

This sequence belongs to the universal ribosomal protein uS2 family.

This chain is Small ribosomal subunit protein uS2, found in Polaromonas naphthalenivorans (strain CJ2).